The following is a 184-amino-acid chain: Large ribosomal subunit protein uL5 (184 aa).

It belongs to the universal ribosomal protein uL5 family. Part of the 50S ribosomal subunit; part of the 5S rRNA/L5/L18/L25 subcomplex. Contacts the 5S rRNA and the P site tRNA. Forms a bridge to the 30S subunit in the 70S ribosome.

Functionally, this is one of the proteins that bind and probably mediate the attachment of the 5S RNA into the large ribosomal subunit, where it forms part of the central protuberance. In the 70S ribosome it contacts protein S13 of the 30S subunit (bridge B1b), connecting the 2 subunits; this bridge is implicated in subunit movement. Contacts the P site tRNA; the 5S rRNA and some of its associated proteins might help stabilize positioning of ribosome-bound tRNAs. This Syntrophotalea carbinolica (strain DSM 2380 / NBRC 103641 / GraBd1) (Pelobacter carbinolicus) protein is Large ribosomal subunit protein uL5.